A 508-amino-acid chain; its full sequence is Bifunctional purine biosynthesis protein PurH (508 aa).

In terms of domain architecture, MGS-like spans 1-145 (MAKKALISVS…KNYKYVTILV (145 aa)).

It belongs to the PurH family.

It carries out the reaction (6R)-10-formyltetrahydrofolate + 5-amino-1-(5-phospho-beta-D-ribosyl)imidazole-4-carboxamide = 5-formamido-1-(5-phospho-D-ribosyl)imidazole-4-carboxamide + (6S)-5,6,7,8-tetrahydrofolate. It catalyses the reaction IMP + H2O = 5-formamido-1-(5-phospho-D-ribosyl)imidazole-4-carboxamide. The protein operates within purine metabolism; IMP biosynthesis via de novo pathway; 5-formamido-1-(5-phospho-D-ribosyl)imidazole-4-carboxamide from 5-amino-1-(5-phospho-D-ribosyl)imidazole-4-carboxamide (10-formyl THF route): step 1/1. It functions in the pathway purine metabolism; IMP biosynthesis via de novo pathway; IMP from 5-formamido-1-(5-phospho-D-ribosyl)imidazole-4-carboxamide: step 1/1. The polypeptide is Bifunctional purine biosynthesis protein PurH (Thermoanaerobacter sp. (strain X514)).